Consider the following 450-residue polypeptide: ADP-specific phosphofructokinase (450 aa).

One can recognise an ADPK domain in the interval 1–449 (MIPEHLSIYT…FLTYLEFLKR (449 aa)). Residues Glu260, Glu290, and Asp433 each contribute to the Mg(2+) site. Catalysis depends on Asp433, which acts as the Proton acceptor.

The protein belongs to the carbohydrate kinase PfkC family. Mg(2+) serves as cofactor.

The protein resides in the cytoplasm. The enzyme catalyses beta-D-fructose 6-phosphate + ADP = beta-D-fructose 1,6-bisphosphate + AMP + H(+). It participates in carbohydrate degradation; glycolysis. In terms of biological role, catalyzes the phosphorylation of fructose 6-phosphate to fructose 1,6-bisphosphate using ADP as the phosphate donor. The chain is ADP-specific phosphofructokinase from Pyrococcus horikoshii (strain ATCC 700860 / DSM 12428 / JCM 9974 / NBRC 100139 / OT-3).